We begin with the raw amino-acid sequence, 670 residues long: UvrABC system protein B (670 aa).

The Helicase ATP-binding domain occupies 26 to 414; it reads EGLEDGLAHQ…GGDVIDQVVR (389 aa). 39-46 provides a ligand contact to ATP; the sequence is GVTGSGKT. Positions 92–115 match the Beta-hairpin motif; the sequence is YYDYYQPEAYVPSSDTFIEKDASV. The region spanning 431 to 597 is the Helicase C-terminal domain; the sequence is QVDDLLSEIR…GINKKISDIL (167 aa). A UVR domain is found at 630 to 665; the sequence is ELKIRELESKMLTHAQNLEFEEAAALRDEVQVLRAQ.

It belongs to the UvrB family. In terms of assembly, forms a heterotetramer with UvrA during the search for lesions. Interacts with UvrC in an incision complex.

The protein localises to the cytoplasm. In terms of biological role, the UvrABC repair system catalyzes the recognition and processing of DNA lesions. A damage recognition complex composed of 2 UvrA and 2 UvrB subunits scans DNA for abnormalities. Upon binding of the UvrA(2)B(2) complex to a putative damaged site, the DNA wraps around one UvrB monomer. DNA wrap is dependent on ATP binding by UvrB and probably causes local melting of the DNA helix, facilitating insertion of UvrB beta-hairpin between the DNA strands. Then UvrB probes one DNA strand for the presence of a lesion. If a lesion is found the UvrA subunits dissociate and the UvrB-DNA preincision complex is formed. This complex is subsequently bound by UvrC and the second UvrB is released. If no lesion is found, the DNA wraps around the other UvrB subunit that will check the other stand for damage. The chain is UvrABC system protein B from Pectobacterium atrosepticum (strain SCRI 1043 / ATCC BAA-672) (Erwinia carotovora subsp. atroseptica).